Here is a 1575-residue protein sequence, read N- to C-terminus: Lysophospholipase NTE1 (1575 aa).

Residues 1-56 (MNLTTTMPAAVAPDPPAQLAVSSRSLSDSSDAAGASRTSSSCRASSPSHCPTHAWN) form a disordered region. Residues 1–99 (MNLTTTMPAA…TLSPPNLLQG (99 aa)) are Cytoplasmic-facing. Over residues 19–48 (LAVSSRSLSDSSDAAGASRTSSSCRASSPS) the composition is skewed to low complexity. A helical transmembrane segment spans residues 100–120 (IVSQLAMASYIGRLLLYLFQV). At 121–151 (VPSLLYWAITFTTITVPTALFTLFSMSLTFT) the chain is on the lumenal side. Residues 152–172 (MNFTTLLIIVLLLVSTVSWFI) traverse the membrane as a helical segment. The Cytoplasmic segment spans residues 173-1575 (RYRFLNIYSR…RTMAPRRASI (1403 aa)). 2 disordered regions span residues 339-425 (DMES…AKSV) and 568-587 (GSASNPIRYGDHESTGVSPG). The segment covering 409–424 (RGHRRKRPSRPKRAKS) has biased composition (basic residues). Residues 737–856 (GGTS…TSYR) and 894–1014 (RLTT…IAQR) contribute to the a nucleoside 3',5'-cyclic phosphate site. The region spanning 1272-1436 (LVLGGGGARG…VDNLTVARMK (165 aa)) is the PNPLA domain. The short motif at 1276–1281 (GGGARG) is the GXGXXG element. A GXSXG motif is present at residues 1303–1307 (GTSIG). Residue Ser1305 is the Nucleophile of the active site. The active-site Proton acceptor is Asp1423. Positions 1423–1425 (DGG) match the DGA/G motif.

The protein belongs to the NTE family.

It is found in the endoplasmic reticulum membrane. It carries out the reaction a 1-acyl-sn-glycero-3-phosphocholine + H2O = sn-glycerol 3-phosphocholine + a fatty acid + H(+). With respect to regulation, inhibited by organophosphorus esters. Its function is as follows. Intracellular phospholipase B that catalyzes the double deacylation of phosphatidylcholine (PC) to glycerophosphocholine (GroPCho). Plays an important role in membrane lipid homeostasis. Responsible for the rapid PC turnover in response to inositol, elevated temperatures, or when choline is present in the growth medium. The polypeptide is Lysophospholipase NTE1 (NTE1) (Coccidioides immitis (strain RS) (Valley fever fungus)).